Consider the following 486-residue polypeptide: Probable glycine dehydrogenase (decarboxylating) subunit 2 (486 aa).

Residues 1 to 26 (MLIFESSRPGRQARAQAPKPTAATND) form a disordered region. Position 264 is an N6-(pyridoxal phosphate)lysine (lysine 264).

It belongs to the GcvP family. C-terminal subunit subfamily. As to quaternary structure, the glycine cleavage system is composed of four proteins: P, T, L and H. In this organism, the P 'protein' is a heterodimer of two subunits. Pyridoxal 5'-phosphate serves as cofactor.

It carries out the reaction N(6)-[(R)-lipoyl]-L-lysyl-[glycine-cleavage complex H protein] + glycine + H(+) = N(6)-[(R)-S(8)-aminomethyldihydrolipoyl]-L-lysyl-[glycine-cleavage complex H protein] + CO2. The glycine cleavage system catalyzes the degradation of glycine. The P protein binds the alpha-amino group of glycine through its pyridoxal phosphate cofactor; CO(2) is released and the remaining methylamine moiety is then transferred to the lipoamide cofactor of the H protein. The polypeptide is Probable glycine dehydrogenase (decarboxylating) subunit 2 (Nitrosococcus oceani (strain ATCC 19707 / BCRC 17464 / JCM 30415 / NCIMB 11848 / C-107)).